Reading from the N-terminus, the 623-residue chain is MAKIIGIDLGTTNSCVSVMEGGEPVVIPNAEGSRTTPSVVSFQANGERLIGQVAKRQAITNPEKTIISIKRYMGTDHKVNIDSTEYTPQQISAMVLQKLKADAEAYLGEKVTQAVITVPAYFNDSQRQATKDAGKIAGLEVLRIINEPTAASLAYGLDKMDTNEKILVYDLGGGTFDVSILELGDGVFEVKATNGDTKLGGDDFDQKLIDYIAETFKAENGIDLRNDKMAIQRLKEAAEKAKIELSSATQTNINLPFITADATGPKHIDMNLTRAKFNELTHDLVQRTLEPIKKSLEGSGYAMSDIDKIIMVGGSTRIPAVQDAVKDFTGKELSKGVNPDEVVAMGAAIQAGVLTGEVKDVLLLDVTPLTLGIETFGGVSTTLIEKNTTIPTRKSQVFSTAADGQTSVEIHVVQGERSMAADNKTLGRFTLSGIAPAPRGIPQIEVTFDIDANGIVNVSAKDKGTGKEANITITASTNLTDDEIEKAVNEAKKFEAEDKKRKESIEIKNNADQIVYQTEKTLTDLGDKVSAEDKAQIEEKVKAVKDVKDGEDLEAIKKATEDLTQTFYGISSKIYQQANPEGAQGAGFDPNNMGGANAGNASAGNDKKDDNVVDADFKVEDDK.

Thr-175 carries the post-translational modification Phosphothreonine; by autocatalysis. The tract at residues 580–623 is disordered; it reads PEGAQGAGFDPNNMGGANAGNASAGNDKKDDNVVDADFKVEDDK. Low complexity predominate over residues 591 to 604; it reads NNMGGANAGNASAG. Positions 605 to 623 are enriched in basic and acidic residues; sequence NDKKDDNVVDADFKVEDDK.

This sequence belongs to the heat shock protein 70 family.

In terms of biological role, acts as a chaperone. The chain is Chaperone protein DnaK from Clostridium botulinum (strain Hall / ATCC 3502 / NCTC 13319 / Type A).